A 455-amino-acid polypeptide reads, in one-letter code: Bifunctional protein GlmU (455 aa).

The pyrophosphorylase stretch occupies residues 1-226; it reads MSLDIVILAA…AMEVQGANDR (226 aa). Residues 8 to 11, lysine 22, glutamine 73, 78 to 79, 99 to 101, glycine 136, glutamate 151, asparagine 166, and asparagine 224 each bind UDP-N-acetyl-alpha-D-glucosamine; these read LAAG, GT, and YGD. Aspartate 101 is a binding site for Mg(2+). Asparagine 224 is a Mg(2+) binding site. Positions 227–247 are linker; that stretch reads KQLSELERHYQLREARRLMAG. The segment at 248–455 is N-acetyltransferase; the sequence is GVTLRDPARF…WKRPVKIRKD (208 aa). The UDP-N-acetyl-alpha-D-glucosamine site is built by arginine 330 and lysine 348. Histidine 360 serves as the catalytic Proton acceptor. UDP-N-acetyl-alpha-D-glucosamine contacts are provided by tyrosine 363 and asparagine 374. Residues alanine 377, 383–384, serine 402, alanine 420, and arginine 437 each bind acetyl-CoA; that span reads NY.

This sequence in the N-terminal section; belongs to the N-acetylglucosamine-1-phosphate uridyltransferase family. In the C-terminal section; belongs to the transferase hexapeptide repeat family. Homotrimer. Mg(2+) serves as cofactor.

It is found in the cytoplasm. It catalyses the reaction alpha-D-glucosamine 1-phosphate + acetyl-CoA = N-acetyl-alpha-D-glucosamine 1-phosphate + CoA + H(+). It carries out the reaction N-acetyl-alpha-D-glucosamine 1-phosphate + UTP + H(+) = UDP-N-acetyl-alpha-D-glucosamine + diphosphate. It functions in the pathway nucleotide-sugar biosynthesis; UDP-N-acetyl-alpha-D-glucosamine biosynthesis; N-acetyl-alpha-D-glucosamine 1-phosphate from alpha-D-glucosamine 6-phosphate (route II): step 2/2. The protein operates within nucleotide-sugar biosynthesis; UDP-N-acetyl-alpha-D-glucosamine biosynthesis; UDP-N-acetyl-alpha-D-glucosamine from N-acetyl-alpha-D-glucosamine 1-phosphate: step 1/1. It participates in bacterial outer membrane biogenesis; LPS lipid A biosynthesis. Its function is as follows. Catalyzes the last two sequential reactions in the de novo biosynthetic pathway for UDP-N-acetylglucosamine (UDP-GlcNAc). The C-terminal domain catalyzes the transfer of acetyl group from acetyl coenzyme A to glucosamine-1-phosphate (GlcN-1-P) to produce N-acetylglucosamine-1-phosphate (GlcNAc-1-P), which is converted into UDP-GlcNAc by the transfer of uridine 5-monophosphate (from uridine 5-triphosphate), a reaction catalyzed by the N-terminal domain. In Pseudomonas savastanoi pv. phaseolicola (strain 1448A / Race 6) (Pseudomonas syringae pv. phaseolicola (strain 1448A / Race 6)), this protein is Bifunctional protein GlmU.